We begin with the raw amino-acid sequence, 491 residues long: UDP-N-acetylmuramate--L-alanine ligase (491 aa).

Residue 126–132 coordinates ATP; that stretch reads GTHGKTT.

Belongs to the MurCDEF family.

Its subcellular location is the cytoplasm. The catalysed reaction is UDP-N-acetyl-alpha-D-muramate + L-alanine + ATP = UDP-N-acetyl-alpha-D-muramoyl-L-alanine + ADP + phosphate + H(+). It functions in the pathway cell wall biogenesis; peptidoglycan biosynthesis. Its function is as follows. Cell wall formation. The chain is UDP-N-acetylmuramate--L-alanine ligase from Shigella dysenteriae serotype 1 (strain Sd197).